A 199-amino-acid polypeptide reads, in one-letter code: Pre T-cell antigen receptor alpha (199 aa).

The first 16 residues, methionine 1–alanine 16, serve as a signal peptide directing secretion. At leucine 17–arginine 155 the chain is on the extracellular side. An intrachain disulfide couples cysteine 47 to cysteine 107. N-linked (GlcNAc...) asparagine glycosylation is found at asparagine 67 and asparagine 117. The interval asparagine 117–glutamate 139 is disordered. The chain crosses the membrane as a helical span at residues leucine 156–leucine 176. Residues alanine 177–threonine 199 are Cytoplasmic-facing.

As to quaternary structure, heterodimer with TCRB; disulfide linked. This heterodimer assembles with CD3 proteins into a signaling-competent pre-T-cell receptor complex. Interacts with RHBDD1. Found in CD45+ but not in the CD45- fetal liver cells.

The protein localises to the membrane. It is found in the cell membrane. Functionally, component of the pre-T-cell receptor complex (composed of PTCRA, TCRB and the CD3 complex) that has a crucial role in early T-cell development, particularly alpha-beta T cell differentiation. The chain is Pre T-cell antigen receptor alpha from Rattus norvegicus (Rat).